The primary structure comprises 186 residues: Putative 5'(3')-deoxyribonucleotidase (186 aa).

It belongs to the 5'(3')-deoxyribonucleotidase family. It depends on Mg(2+) as a cofactor.

Dephosphorylates the 5' and 2'(3')-phosphates of deoxyribonucleotides. The sequence is that of Putative 5'(3')-deoxyribonucleotidase from Bordetella parapertussis (strain 12822 / ATCC BAA-587 / NCTC 13253).